A 253-amino-acid chain; its full sequence is Transcription factor ORG2 (253 aa).

In terms of domain architecture, bHLH spans 71 to 123 (VKKLNHNASERDRRKKINTLFSSLRSCLPASDQSKKLSIPETVSKSLKYIPEL).

Homodimer. Roots.

It is found in the nucleus. The protein is Transcription factor ORG2 (ORG2) of Arabidopsis thaliana (Mouse-ear cress).